We begin with the raw amino-acid sequence, 225 residues long: Lipoprotein-releasing system ATP-binding protein LolD (225 aa).

In terms of domain architecture, ABC transporter spans 5–225 (LEVMDLTKGY…RLVDGRVVAD (221 aa)). 41-48 (GASGTGKS) is a binding site for ATP.

This sequence belongs to the ABC transporter superfamily. Lipoprotein translocase (TC 3.A.1.125) family. The complex is composed of two ATP-binding proteins (LolD) and two transmembrane proteins (LolC and LolE).

Its subcellular location is the cell inner membrane. Its function is as follows. Part of the ABC transporter complex LolCDE involved in the translocation of mature outer membrane-directed lipoproteins, from the inner membrane to the periplasmic chaperone, LolA. Responsible for the formation of the LolA-lipoprotein complex in an ATP-dependent manner. This chain is Lipoprotein-releasing system ATP-binding protein LolD, found in Geobacter metallireducens (strain ATCC 53774 / DSM 7210 / GS-15).